Consider the following 336-residue polypeptide: Tryptophan--tRNA ligase 1 (336 aa).

Residues 9–11 (KPT) and 17–18 (GN) contribute to the ATP site. Positions 10-18 (PTGHLTLGN) match the 'HIGH' region motif. Asp-137 serves as a coordination point for L-tryptophan. Residues 149 to 151 (GED), Val-188, and 197 to 201 (KMGKS) each bind ATP. A 'KMSKS' region motif is present at residues 197–201 (KMGKS).

It belongs to the class-I aminoacyl-tRNA synthetase family. As to quaternary structure, homodimer.

It is found in the cytoplasm. The catalysed reaction is tRNA(Trp) + L-tryptophan + ATP = L-tryptophyl-tRNA(Trp) + AMP + diphosphate + H(+). Functionally, catalyzes the attachment of tryptophan to tRNA(Trp). The sequence is that of Tryptophan--tRNA ligase 1 from Streptomyces coelicolor (strain ATCC BAA-471 / A3(2) / M145).